Consider the following 394-residue polypeptide: Putative bacilysin exporter BacE (394 aa).

Helical transmembrane passes span 11 to 31, 43 to 63, 69 to 89, 92 to 112, 142 to 162, 166 to 186, 215 to 235, 244 to 264, 288 to 308, 332 to 352, and 353 to 373; these read LLYG…ALLI, SGVI…GVLV, IKIM…LTFL, GEYP…GVFF, IIVG…ELAV, GVTY…FVPI, MFTM…FPIV, IGNF…AALV, LFLF…FFIA, IFSV…MFIN, and ILSA…LFLH.

This sequence belongs to the major facilitator superfamily. Drug:H(+) antiporter-3 (DHA3) (TC 2.A.1.21) family.

The protein localises to the cell membrane. Part of the bacilysin biosynthesis operon. May be involved in self-resistance to bacilysin by permitting efflux of this antibiotic. The chain is Putative bacilysin exporter BacE (bacE) from Bacillus subtilis (strain 168).